Here is a 360-residue protein sequence, read N- to C-terminus: Snurportin-1 (360 aa).

Residue Met-1 is modified to N-acetylmethionine. Residues 1 to 42 form a disordered region; that stretch reads MEELSQALASSFSVSQDLNSTAAPHPRLSQYKSKYSSLEQSE. Residues 1–65 are necessary for interaction with KPNB1 and m3G-cap U1 and U5 snRNP import receptor activity; that stretch reads MEELSQALAS…LDYVNHARRL (65 aa). Residues 1 to 159 are necessary for interaction with XPO1; it reads MEELSQALAS…NRFSSLLPGG (159 aa). The segment covering 7–22 has biased composition (polar residues); it reads ALASSFSVSQDLNSTA. Residues 11–73 form the IBB domain; sequence SFSVSQDLNS…RLAEDDWTGM (63 aa). Residue Ser-75 is modified to Phosphoserine. The interval 127 to 129 is interaction with m3G-cap structure; sequence GKR. Positions 208–328 are necessary for binding to the m3G-cap structure; that stretch reads MHSKLPEEEG…GMKEKLTHKA (121 aa). Positions 339-360 are disordered; that stretch reads LSTPKLKGSSHSPDHPGCLMEN. Position 350 is a phosphoserine (Ser-350).

The protein belongs to the snurportin family. Component of an import snRNP complex composed of KPNB1, SNUPN, SMN1 and ZNF259. Component of a nuclear export receptor complex composed of KPNB1, Ran, SNUPN and XPO1. Found in a trimeric export complex with SNUPN, Ran and XPO1. Interacts (via IBB domain) with KPNB1; the interaction is direct. Interacts with DDX20, IPO7, SMN1, SNRPB and XPO1. Interacts directly with XPO1. Its interaction with XPO1 and binding to m3G-cap U snRNPs appears to be mutually exclusive. Can form homomers.

It is found in the nucleus. Its subcellular location is the cytoplasm. Functions as an U snRNP-specific nuclear import adapter. Involved in the trimethylguanosine (m3G)-cap-dependent nuclear import of U snRNPs. Binds specifically to the terminal m3G-cap U snRNAs. This is Snurportin-1 (SNUPN) from Homo sapiens (Human).